A 310-amino-acid chain; its full sequence is L-lactate dehydrogenase (310 aa).

Residues Val11, Asp32, Tyr62, and Gly76 to Val77 contribute to the NAD(+) site. Substrate-binding positions include Gln79, Arg85, and Asn117 to Asp120. Residues Ala115–Asn117 and Ser140 contribute to the NAD(+) site. Asp145–Arg148 provides a ligand contact to substrate. Beta-D-fructose 1,6-bisphosphate is bound by residues Arg150 and His165. Residue His172 is the Proton acceptor of the active site. At Tyr218 the chain carries Phosphotyrosine. Residue Thr227 coordinates substrate.

This sequence belongs to the LDH/MDH superfamily. LDH family. Homotetramer.

The protein localises to the cytoplasm. The enzyme catalyses (S)-lactate + NAD(+) = pyruvate + NADH + H(+). It participates in fermentation; pyruvate fermentation to lactate; (S)-lactate from pyruvate: step 1/1. With respect to regulation, activated by citrate at pH 5. Allosterically activated by fructose 1,6-bisphosphate (FBP) at pH from 5.8 to 7.2. Catalyzes the conversion of lactate to pyruvate. This Thermus aquaticus protein is L-lactate dehydrogenase.